An 880-amino-acid polypeptide reads, in one-letter code: DNA polymerase I (880 aa).

Positions 174-268 constitute a 5'-3' exonuclease domain; that stretch reads TPEQIIDMKG…SGLEYQGFNR (95 aa). The 3'-5' exonuclease domain maps to 302 to 470; sequence DINVKTVTDV…LREKLVQELE (169 aa).

The protein belongs to the DNA polymerase type-A family. Single-chain monomer with multiple functions.

It catalyses the reaction DNA(n) + a 2'-deoxyribonucleoside 5'-triphosphate = DNA(n+1) + diphosphate. In addition to polymerase activity, this DNA polymerase exhibits 3'-5' and 5'-3' exonuclease activity. This chain is DNA polymerase I (polA), found in Bacillus subtilis (strain 168).